Reading from the N-terminus, the 155-residue chain is Aspartate carbamoyltransferase regulatory chain (155 aa).

Zn(2+) is bound by residues Cys112, Cys117, Cys138, and Cys141.

The protein belongs to the PyrI family. Contains catalytic and regulatory chains. The cofactor is Zn(2+).

Involved in allosteric regulation of aspartate carbamoyltransferase. In Methanocorpusculum labreanum (strain ATCC 43576 / DSM 4855 / Z), this protein is Aspartate carbamoyltransferase regulatory chain.